Here is a 196-residue protein sequence, read N- to C-terminus: uncharacterized protein (196 aa).

A Macro domain is found at 1–183; that stretch reads MREFHYGVHM…RFLFILSDLG (183 aa).

This sequence belongs to the MacroD-type family.

This is an uncharacterized protein from Thermoplasma acidophilum (strain ATCC 25905 / DSM 1728 / JCM 9062 / NBRC 15155 / AMRC-C165).